A 106-amino-acid chain; its full sequence is UPF0145 protein Dhaf_3855 (106 aa).

The protein belongs to the UPF0145 family.

The protein is UPF0145 protein Dhaf_3855 of Desulfitobacterium hafniense (strain DSM 10664 / DCB-2).